Consider the following 221-residue polypeptide: Oligoribonuclease (221 aa).

The 166-residue stretch at 21-186 (LVWVDLEMTG…ADIVESIREL (166 aa)) folds into the Exonuclease domain. Y143 is an active-site residue.

Belongs to the oligoribonuclease family.

Its subcellular location is the cytoplasm. In terms of biological role, 3'-to-5' exoribonuclease specific for small oligoribonucleotides. This Corynebacterium efficiens (strain DSM 44549 / YS-314 / AJ 12310 / JCM 11189 / NBRC 100395) protein is Oligoribonuclease.